Here is a 253-residue protein sequence, read N- to C-terminus: Trypsin delta (253 aa).

Residues 1-22 form the signal peptide; the sequence is MLKFVILLSAVACALGGTIPEG. Positions 23-30 are cleaved as a propeptide — activation peptide; sequence LLPQLDGR. Residues 31–253 enclose the Peptidase S1 domain; sequence IVGGTATTIS…DLRAWVVRNA (223 aa). C56 and C72 form a disulfide bridge. Catalysis depends on charge relay system residues H71 and D116. Cystine bridges form between C180–C197 and C206–C230. S210 functions as the Charge relay system in the catalytic mechanism.

Belongs to the peptidase S1 family.

The protein resides in the secreted. Its subcellular location is the extracellular space. The catalysed reaction is Preferential cleavage: Arg-|-Xaa, Lys-|-Xaa.. The sequence is that of Trypsin delta from Drosophila erecta (Fruit fly).